We begin with the raw amino-acid sequence, 389 residues long: Phospho-N-acetylmuramoyl-pentapeptide-transferase (389 aa).

Transmembrane regions (helical) follow at residues 25–45, 74–94, 97–117, 134–154, 167–187, 190–210, 222–242, 259–279, 286–306, 311–331, and 366–386; these read RAVM…PWVI, MGGV…CDWG, FIWV…VDDY, FFWQ…SVSE, WIEG…VPFF, VSYP…IVGS, GLVI…AYVM, AGEL…FLWF, VFMG…VAVI, IVLF…MLQV, and QVTV…LSSL.

Belongs to the glycosyltransferase 4 family. MraY subfamily. The cofactor is Mg(2+).

Its subcellular location is the cell inner membrane. The catalysed reaction is UDP-N-acetyl-alpha-D-muramoyl-L-alanyl-gamma-D-glutamyl-meso-2,6-diaminopimeloyl-D-alanyl-D-alanine + di-trans,octa-cis-undecaprenyl phosphate = di-trans,octa-cis-undecaprenyl diphospho-N-acetyl-alpha-D-muramoyl-L-alanyl-D-glutamyl-meso-2,6-diaminopimeloyl-D-alanyl-D-alanine + UMP. Its pathway is cell wall biogenesis; peptidoglycan biosynthesis. Its function is as follows. Catalyzes the initial step of the lipid cycle reactions in the biosynthesis of the cell wall peptidoglycan: transfers peptidoglycan precursor phospho-MurNAc-pentapeptide from UDP-MurNAc-pentapeptide onto the lipid carrier undecaprenyl phosphate, yielding undecaprenyl-pyrophosphoryl-MurNAc-pentapeptide, known as lipid I. The polypeptide is Phospho-N-acetylmuramoyl-pentapeptide-transferase (Cupriavidus metallidurans (strain ATCC 43123 / DSM 2839 / NBRC 102507 / CH34) (Ralstonia metallidurans)).